The sequence spans 402 residues: Flavohemoprotein (402 aa).

Positions 1–136 constitute a Globin domain; sequence MLSEKTIEIV…IADAFISIEA (136 aa). His-85 serves as a coordination point for heme b. Residues Tyr-95 and Glu-135 each act as charge relay system in the active site. The reductase stretch occupies residues 147–402; it reads GGWKDFRNFV…EFFGPAASLQ (256 aa). Residues 150-260 form the FAD-binding FR-type domain; that stretch reads KDFRNFVVVK…SAPAGDFVLN (111 aa). Residues Tyr-188 and 204 to 207 contribute to the FAD site; that span reads RQYS. 273-278 is an NADP(+) binding site; the sequence is GVGITP. 394-397 is an FAD binding site; the sequence is FFGP.

The protein belongs to the globin family. Two-domain flavohemoproteins subfamily. This sequence in the C-terminal section; belongs to the flavoprotein pyridine nucleotide cytochrome reductase family. Requires heme b as cofactor. FAD serves as cofactor.

The enzyme catalyses 2 nitric oxide + NADPH + 2 O2 = 2 nitrate + NADP(+) + H(+). It carries out the reaction 2 nitric oxide + NADH + 2 O2 = 2 nitrate + NAD(+) + H(+). In terms of biological role, is involved in NO detoxification in an aerobic process, termed nitric oxide dioxygenase (NOD) reaction that utilizes O(2) and NAD(P)H to convert NO to nitrate, which protects the bacterium from various noxious nitrogen compounds. Therefore, plays a central role in the inducible response to nitrosative stress. The chain is Flavohemoprotein from Bacillus anthracis.